Consider the following 89-residue polypeptide: Small ribosomal subunit protein uS15 (89 aa).

It belongs to the universal ribosomal protein uS15 family. In terms of assembly, part of the 30S ribosomal subunit. Forms a bridge to the 50S subunit in the 70S ribosome, contacting the 23S rRNA.

One of the primary rRNA binding proteins, it binds directly to 16S rRNA where it helps nucleate assembly of the platform of the 30S subunit by binding and bridging several RNA helices of the 16S rRNA. Functionally, forms an intersubunit bridge (bridge B4) with the 23S rRNA of the 50S subunit in the ribosome. This chain is Small ribosomal subunit protein uS15, found in Mycolicibacterium smegmatis (strain ATCC 700084 / mc(2)155) (Mycobacterium smegmatis).